Consider the following 236-residue polypeptide: Probable metal transport system ATP-binding protein CT_416 (236 aa).

The 232-residue stretch at 5–236 (MLLENVSFRY…FCCNTFGRCP (232 aa)) folds into the ABC transporter domain. 39–46 (GPNGGGKT) provides a ligand contact to ATP.

The protein belongs to the ABC transporter superfamily.

Its subcellular location is the cell inner membrane. Its function is as follows. Part of an ATP-driven transport system CT_415/CT_416/CT_417 for a metal. Probably responsible for energy coupling to the transport system. This chain is Probable metal transport system ATP-binding protein CT_416, found in Chlamydia trachomatis serovar D (strain ATCC VR-885 / DSM 19411 / UW-3/Cx).